The sequence spans 610 residues: UvrABC system protein C (610 aa).

The region spanning 16-94 (SQPGVYRMYD…IKLYQPRYNV (79 aa)) is the GIY-YIG domain. The UVR domain occupies 204-239 (QQVLTRLIERMEQASQQLKFEDAARYRDQIQAVRQV).

The protein belongs to the UvrC family. In terms of assembly, interacts with UvrB in an incision complex.

The protein resides in the cytoplasm. Functionally, the UvrABC repair system catalyzes the recognition and processing of DNA lesions. UvrC both incises the 5' and 3' sides of the lesion. The N-terminal half is responsible for the 3' incision and the C-terminal half is responsible for the 5' incision. This is UvrABC system protein C from Photorhabdus laumondii subsp. laumondii (strain DSM 15139 / CIP 105565 / TT01) (Photorhabdus luminescens subsp. laumondii).